The following is a 203-amino-acid chain: Large ribosomal subunit protein bL25 (203 aa).

The protein belongs to the bacterial ribosomal protein bL25 family. CTC subfamily. Part of the 50S ribosomal subunit; part of the 5S rRNA/L5/L18/L25 subcomplex. Contacts the 5S rRNA. Binds to the 5S rRNA independently of L5 and L18.

In terms of biological role, this is one of the proteins that binds to the 5S RNA in the ribosome where it forms part of the central protuberance. In Pseudomonas syringae pv. tomato (strain ATCC BAA-871 / DC3000), this protein is Large ribosomal subunit protein bL25.